The sequence spans 486 residues: Protein nucleotidyltransferase YdiU (486 aa).

ATP-binding residues include G90, G92, R93, K113, D125, G126, R176, and R183. D252 serves as the catalytic Proton acceptor. Mg(2+)-binding residues include N253 and D262. Position 262 (D262) interacts with ATP.

Belongs to the SELO family. The cofactor is Mg(2+). Mn(2+) is required as a cofactor.

It catalyses the reaction L-seryl-[protein] + ATP = 3-O-(5'-adenylyl)-L-seryl-[protein] + diphosphate. It carries out the reaction L-threonyl-[protein] + ATP = 3-O-(5'-adenylyl)-L-threonyl-[protein] + diphosphate. The enzyme catalyses L-tyrosyl-[protein] + ATP = O-(5'-adenylyl)-L-tyrosyl-[protein] + diphosphate. The catalysed reaction is L-histidyl-[protein] + UTP = N(tele)-(5'-uridylyl)-L-histidyl-[protein] + diphosphate. It catalyses the reaction L-seryl-[protein] + UTP = O-(5'-uridylyl)-L-seryl-[protein] + diphosphate. It carries out the reaction L-tyrosyl-[protein] + UTP = O-(5'-uridylyl)-L-tyrosyl-[protein] + diphosphate. Functionally, nucleotidyltransferase involved in the post-translational modification of proteins. It can catalyze the addition of adenosine monophosphate (AMP) or uridine monophosphate (UMP) to a protein, resulting in modifications known as AMPylation and UMPylation. In Pseudomonas putida (strain GB-1), this protein is Protein nucleotidyltransferase YdiU.